The chain runs to 238 residues: Accessory gene regulator A (238 aa).

The Response regulatory domain maps to 2 to 125 (KIFICEDDPK…LRTRIIDCLE (124 aa)). The residue at position 59 (D59) is a 4-aspartylphosphate. In terms of domain architecture, HTH LytTR-type spans 143 to 238 (IELKRGSNSV…YASVRNVKKK (96 aa)).

The protein localises to the cytoplasm. Functionally, required for high-level post-exponential phase expression of a series of secreted proteins. The chain is Accessory gene regulator A (agrA) from Staphylococcus aureus (strain Mu50 / ATCC 700699).